Consider the following 93-residue polypeptide: Sec-independent protein translocase protein TatA (93 aa).

Residues 1–21 (MGNVFSGWHLLVILLVIVLLF) form a helical membrane-spanning segment. A disordered region spans residues 49–93 (DITRSQDGHPDSQGNFAESASSVPFVKSEKQSEKRASVTEAKKSK). The span at 60-70 (SQGNFAESASS) shows a compositional bias: polar residues. Residues 75-93 (KSEKQSEKRASVTEAKKSK) show a composition bias toward basic and acidic residues.

It belongs to the TatA/E family. In terms of assembly, the Tat system comprises two distinct complexes: a TatABC complex, containing multiple copies of TatA, TatB and TatC subunits, and a separate TatA complex, containing only TatA subunits. Substrates initially bind to the TatABC complex, which probably triggers association of the separate TatA complex to form the active translocon.

The protein resides in the cell membrane. Functionally, part of the twin-arginine translocation (Tat) system that transports large folded proteins containing a characteristic twin-arginine motif in their signal peptide across membranes. TatA could form the protein-conducting channel of the Tat system. The protein is Sec-independent protein translocase protein TatA of Tropheryma whipplei (strain TW08/27) (Whipple's bacillus).